The chain runs to 232 residues: Flagellar L-ring protein (232 aa).

The first 21 residues, 1–21 (MQKNAAHTYAISSLLVLSLTG), serve as a signal peptide directing secretion. The N-palmitoyl cysteine moiety is linked to residue Cys-22. A lipid anchor (S-diacylglycerol cysteine) is attached at Cys-22.

The protein belongs to the FlgH family. As to quaternary structure, the basal body constitutes a major portion of the flagellar organelle and consists of four rings (L,P,S, and M) mounted on a central rod.

It localises to the cell outer membrane. The protein localises to the bacterial flagellum basal body. Assembles around the rod to form the L-ring and probably protects the motor/basal body from shearing forces during rotation. The polypeptide is Flagellar L-ring protein (Shigella dysenteriae serotype 1 (strain Sd197)).